The following is a 145-amino-acid chain: uncharacterized protein (145 aa).

Belongs to the SAP18 family.

It localises to the cytoplasm. It is found in the nucleus. This is an uncharacterized protein from Schizosaccharomyces pombe (strain 972 / ATCC 24843) (Fission yeast).